The primary structure comprises 161 residues: Phosphopantetheine adenylyltransferase (161 aa).

Ser-9 is a binding site for substrate. ATP contacts are provided by residues 9-10 (SF) and His-17. Lys-41, Thr-73, and Arg-87 together coordinate substrate. ATP-binding positions include 88 to 90 (GIR), Glu-98, and 123 to 129 (YQYVSSS).

Belongs to the bacterial CoaD family. As to quaternary structure, homohexamer. Mg(2+) is required as a cofactor.

The protein localises to the cytoplasm. It carries out the reaction (R)-4'-phosphopantetheine + ATP + H(+) = 3'-dephospho-CoA + diphosphate. It participates in cofactor biosynthesis; coenzyme A biosynthesis; CoA from (R)-pantothenate: step 4/5. Functionally, reversibly transfers an adenylyl group from ATP to 4'-phosphopantetheine, yielding dephospho-CoA (dPCoA) and pyrophosphate. In Levilactobacillus brevis (strain ATCC 367 / BCRC 12310 / CIP 105137 / JCM 1170 / LMG 11437 / NCIMB 947 / NCTC 947) (Lactobacillus brevis), this protein is Phosphopantetheine adenylyltransferase.